The primary structure comprises 358 residues: Small ribosomal subunit biogenesis GTPase RsgA (358 aa).

Positions 76-234 (STEIDRPAVA…LADSPGFNQP (159 aa)) constitute a CP-type G domain. Residues 125-128 (NKID) and 176-184 (GPSGVGKSS) contribute to the GTP site. Zn(2+) contacts are provided by C259, C264, H266, and C272. Positions 319–358 (TYEPKLANKKYRRPSRRGKNQDQERYENKTLQDIYNDDSE) are disordered. A compositionally biased stretch (basic residues) spans 325-336 (ANKKYRRPSRRG). Residues 337–348 (KNQDQERYENKT) are compositionally biased toward basic and acidic residues.

It belongs to the TRAFAC class YlqF/YawG GTPase family. RsgA subfamily. As to quaternary structure, monomer. Associates with 30S ribosomal subunit, binds 16S rRNA. Zn(2+) is required as a cofactor.

It localises to the cytoplasm. In terms of biological role, one of several proteins that assist in the late maturation steps of the functional core of the 30S ribosomal subunit. Helps release RbfA from mature subunits. May play a role in the assembly of ribosomal proteins into the subunit. Circularly permuted GTPase that catalyzes slow GTP hydrolysis, GTPase activity is stimulated by the 30S ribosomal subunit. In Microcystis aeruginosa (strain NIES-843 / IAM M-2473), this protein is Small ribosomal subunit biogenesis GTPase RsgA.